A 148-amino-acid polypeptide reads, in one-letter code: MAGILVLNGPNLNLLGVREPGIYGSDTLSDIESRLQAQARVAGMPIDFFQSNAEHALIERIHQAFRDAVDMIIINPGALTHTSVALRDALLATAVPFIEVHISNVHAREPFRRHSYLSDIARGVICGLGPMGYELALQAALQMTHRSL.

The active-site Proton acceptor is Tyr-23. The substrate site is built by Asn-75, His-81, and Asp-88. His-101 serves as the catalytic Proton donor. Substrate-binding positions include 102 to 103 (IS) and Arg-112.

The protein belongs to the type-II 3-dehydroquinase family. In terms of assembly, homododecamer.

The enzyme catalyses 3-dehydroquinate = 3-dehydroshikimate + H2O. It functions in the pathway metabolic intermediate biosynthesis; chorismate biosynthesis; chorismate from D-erythrose 4-phosphate and phosphoenolpyruvate: step 3/7. Catalyzes a trans-dehydration via an enolate intermediate. This is 3-dehydroquinate dehydratase from Methylococcus capsulatus (strain ATCC 33009 / NCIMB 11132 / Bath).